A 176-amino-acid polypeptide reads, in one-letter code: Interleukin-19 (176 aa).

An N-terminal signal peptide occupies residues 1-24; the sequence is MKTQCASTWLLGMTLILCSVHIYS. Disulfide bonds link C28-C120, C74-C126, and C75-C128. N56 carries N-linked (GlcNAc...) asparagine glycosylation. N127 and N134 each carry an N-linked (GlcNAc...) asparagine glycan.

Belongs to the IL-10 family.

It localises to the secreted. Its function is as follows. Cytokine that functions as an anti-inflammatory and proangiogenic factor. Polarizes adaptive immunity to an anti-inflammatory phenotype through induction of T-helper 2 responses by both down-regulation of IFN-gamma and up-regulation of IL4 and IL5. Produced by osteocytes, stimulates granulopoiesis and neutrophil formation. Exerts its biological effect through a receptor complex consisting of a heterodimer of IL20RA and IL20RB. In turn, activates the Janus kinase (JAK) and signal transducer and activator of transcription (STAT) pathway, and importantly, STAT3. The polypeptide is Interleukin-19 (Il19) (Mus musculus (Mouse)).